The primary structure comprises 529 residues: Peptide chain release factor 3 (529 aa).

The tr-type G domain occupies 11–280 (ATRRTFAIIS…GLVQWAPPPQ (270 aa)). GTP contacts are provided by residues 20–27 (SHPDAGKT), 88–92 (DTPGH), and 142–145 (NKLD).

The protein belongs to the TRAFAC class translation factor GTPase superfamily. Classic translation factor GTPase family. PrfC subfamily.

It is found in the cytoplasm. Its function is as follows. Increases the formation of ribosomal termination complexes and stimulates activities of RF-1 and RF-2. It binds guanine nucleotides and has strong preference for UGA stop codons. It may interact directly with the ribosome. The stimulation of RF-1 and RF-2 is significantly reduced by GTP and GDP, but not by GMP. The polypeptide is Peptide chain release factor 3 (Alcanivorax borkumensis (strain ATCC 700651 / DSM 11573 / NCIMB 13689 / SK2)).